The primary structure comprises 436 residues: Cholecystokinin receptor type A (436 aa).

Over 1-41 the chain is Extracellular; sequence MDVVDSLLMNGSNITPPCELGLENETLFCLDQPQPSKEWQS. Asparagine 10 and asparagine 24 each carry an N-linked (GlcNAc...) asparagine glycan. Cysteines 18 and 29 form a disulfide. The helical transmembrane segment at 42 to 67 threads the bilayer; that stretch reads AVQILLYSFIFLLSVLGNTLVITVLI. The Cytoplasmic portion of the chain corresponds to 68–77; sequence RNKRMRTVTN. A helical transmembrane segment spans residues 78–104; that stretch reads IFLLSLAVSDLMLCLFCMPFNLIPNLL. The Extracellular segment spans residues 105-115; that stretch reads KDFIFGSAVCK. Cysteine 114 and cysteine 196 form a disulfide bridge. The helical transmembrane segment at 116–137 threads the bilayer; sequence TTTYFMGTSVSVSTFNLVAISL. The Cytoplasmic portion of the chain corresponds to 138–157; sequence ERYGAICRPLQSRVWQTKSH. The chain crosses the membrane as a helical span at residues 158-178; sequence ALKVIAATWCLSFTIMTPYPI. The Extracellular portion of the chain corresponds to 179–210; sequence YSNLVPFTKNNNQTANMCRFLLPSDAMQQSWQ. The N-linked (GlcNAc...) asparagine glycan is linked to asparagine 190. Residues 211 to 234 traverse the membrane as a helical segment; the sequence is TFLLLILFLIPGVVMVVAYGLISL. The Cytoplasmic segment spans residues 235 to 321; that stretch reads ELYQGIKFDA…NLIAKKRVIR (87 aa). Positions 252 to 280 are disordered; it reads EKRLSSGGGGGGGSSSSRYEDSDGCYLQK. Residues 322–342 form a helical membrane-spanning segment; that stretch reads MLIVIVVLFFLCWMPIFSANA. Residues 343–357 are Extracellular-facing; sequence WRAYDTVSAEKHLSG. The chain crosses the membrane as a helical span at residues 358-381; the sequence is TPISFILLLSYTSSCVNPIIYCFM. Over 382–436 the chain is Cytoplasmic; that stretch reads NKRFRLGFMATFPCCPNPGPTGVRGEVGEEEDGRTIRASLSRYSYSHMSTSAPPH. A lipid anchor (S-palmitoyl cysteine) is attached at cysteine 395.

Belongs to the G-protein coupled receptor 1 family.

The protein resides in the cell membrane. Functionally, receptor for cholecystokinin. Mediates pancreatic growth and enzyme secretion, smooth muscle contraction of the gall bladder and stomach. Has a 1000-fold higher affinity for CCK rather than for gastrin. It modulates feeding and dopamine-induced behavior in the central and peripheral nervous system. This receptor mediates its action by association with G proteins that activate a phosphatidylinositol-calcium second messenger system. The protein is Cholecystokinin receptor type A (Cckar) of Mus musculus (Mouse).